The primary structure comprises 722 residues: Polyribonucleotide nucleotidyltransferase (722 aa).

Mg(2+) is bound by residues D505 and D511. In terms of domain architecture, KH spans 572-631; it reads PSITTIKIHPDKIRDVIGKGGATIRGICDETGASIDLDDDGNVKIYADNAAAAQAAVNRV. The region spanning 641–709 is the S1 motif domain; that stretch reads GAIYKGRVER…NRGRVKLSMK (69 aa).

This sequence belongs to the polyribonucleotide nucleotidyltransferase family. As to quaternary structure, component of the RNA degradosome, which is a multiprotein complex involved in RNA processing and mRNA degradation. Mg(2+) serves as cofactor.

The protein resides in the cytoplasm. The enzyme catalyses RNA(n+1) + phosphate = RNA(n) + a ribonucleoside 5'-diphosphate. Functionally, involved in mRNA degradation. Catalyzes the phosphorolysis of single-stranded polyribonucleotides processively in the 3'- to 5'-direction. This Marinobacter nauticus (strain ATCC 700491 / DSM 11845 / VT8) (Marinobacter aquaeolei) protein is Polyribonucleotide nucleotidyltransferase.